Here is a 149-residue protein sequence, read N- to C-terminus: Nucleoside diphosphate kinase (149 aa).

Residues Lys9, Phe57, Arg85, Thr91, Arg102, and Asn112 each coordinate ATP. Catalysis depends on His115, which acts as the Pros-phosphohistidine intermediate.

Belongs to the NDK family. In terms of assembly, homotetramer. Mg(2+) is required as a cofactor.

It is found in the cytoplasm. It catalyses the reaction dZDP + ATP = dZTP + ADP. The enzyme catalyses a 2'-deoxyribonucleoside 5'-diphosphate + ATP = a 2'-deoxyribonucleoside 5'-triphosphate + ADP. The catalysed reaction is a ribonucleoside 5'-diphosphate + ATP = a ribonucleoside 5'-triphosphate + ADP. It functions in the pathway purine metabolism. Its function is as follows. Major role in the synthesis of nucleoside triphosphates other than ATP. The ATP gamma phosphate is transferred to the NDP beta phosphate via a ping-pong mechanism, using a phosphorylated active-site intermediate. In terms of biological role, (Microbial infection) Catalyzes the phosphorylation of dZDP to dZTP, when the bacterium is infected by a phage that produces the substrate for the synthesis of dZTP (2- amino-2'-deoxyadenosine 5'-triphosphate), which is then used by the phage as a DNA polymerase substrate. The sequence is that of Nucleoside diphosphate kinase from Synechococcus elongatus (strain ATCC 33912 / PCC 7942 / FACHB-805) (Anacystis nidulans R2).